The following is a 276-amino-acid chain: Putative pyruvate, phosphate dikinase regulatory protein (276 aa).

Position 154 to 161 (154 to 161) interacts with ADP; that stretch reads GVSRTSKS.

This sequence belongs to the pyruvate, phosphate/water dikinase regulatory protein family. PDRP subfamily.

The enzyme catalyses N(tele)-phospho-L-histidyl/L-threonyl-[pyruvate, phosphate dikinase] + ADP = N(tele)-phospho-L-histidyl/O-phospho-L-threonyl-[pyruvate, phosphate dikinase] + AMP + H(+). The catalysed reaction is N(tele)-phospho-L-histidyl/O-phospho-L-threonyl-[pyruvate, phosphate dikinase] + phosphate + H(+) = N(tele)-phospho-L-histidyl/L-threonyl-[pyruvate, phosphate dikinase] + diphosphate. Functionally, bifunctional serine/threonine kinase and phosphorylase involved in the regulation of the pyruvate, phosphate dikinase (PPDK) by catalyzing its phosphorylation/dephosphorylation. This is Putative pyruvate, phosphate dikinase regulatory protein from Wolbachia pipientis wMel.